We begin with the raw amino-acid sequence, 139 residues long: uncharacterized protein (139 aa).

The protein to M.tuberculosis Rv2798c.

This is an uncharacterized protein from Mycobacterium tuberculosis (strain CDC 1551 / Oshkosh).